Consider the following 468-residue polypeptide: Probable Xaa-Pro aminopeptidase PEPP (468 aa).

Residues Asp264, Asp275, Glu398, and Glu438 each coordinate Mn(2+).

Belongs to the peptidase M24B family. It depends on Mn(2+) as a cofactor.

The catalysed reaction is Release of any N-terminal amino acid, including proline, that is linked to proline, even from a dipeptide or tripeptide.. Functionally, catalyzes the removal of a penultimate prolyl residue from the N-termini of peptides. The protein is Probable Xaa-Pro aminopeptidase PEPP (PEPP) of Paracoccidioides brasiliensis (strain Pb18).